The primary structure comprises 365 residues: Aminomethyltransferase (365 aa).

This sequence belongs to the GcvT family. In terms of assembly, the glycine cleavage system is composed of four proteins: P, T, L and H.

The enzyme catalyses N(6)-[(R)-S(8)-aminomethyldihydrolipoyl]-L-lysyl-[protein] + (6S)-5,6,7,8-tetrahydrofolate = N(6)-[(R)-dihydrolipoyl]-L-lysyl-[protein] + (6R)-5,10-methylene-5,6,7,8-tetrahydrofolate + NH4(+). Its function is as follows. The glycine cleavage system catalyzes the degradation of glycine. The protein is Aminomethyltransferase of Desulfitobacterium hafniense (strain Y51).